The primary structure comprises 431 residues: Enolase (431 aa).

Gln-166 contributes to the (2R)-2-phosphoglycerate binding site. Residue Glu-208 is the Proton donor of the active site. Residues Asp-245, Glu-288, and Asp-315 each coordinate Mg(2+). 4 residues coordinate (2R)-2-phosphoglycerate: Lys-340, Arg-369, Ser-370, and Lys-391. Lys-340 acts as the Proton acceptor in catalysis.

It belongs to the enolase family. It depends on Mg(2+) as a cofactor.

The protein localises to the cytoplasm. It localises to the secreted. It is found in the cell surface. The catalysed reaction is (2R)-2-phosphoglycerate = phosphoenolpyruvate + H2O. Its pathway is carbohydrate degradation; glycolysis; pyruvate from D-glyceraldehyde 3-phosphate: step 4/5. Functionally, catalyzes the reversible conversion of 2-phosphoglycerate (2-PG) into phosphoenolpyruvate (PEP). It is essential for the degradation of carbohydrates via glycolysis. The protein is Enolase of Clostridium botulinum (strain Eklund 17B / Type B).